A 66-amino-acid polypeptide reads, in one-letter code: Translational regulator CsrA (66 aa).

This sequence belongs to the CsrA/RsmA family. In terms of assembly, homodimer; the beta-strands of each monomer intercalate to form a hydrophobic core, while the alpha-helices form wings that extend away from the core.

The protein resides in the cytoplasm. Its function is as follows. A key translational regulator that binds mRNA to regulate translation initiation and/or mRNA stability. Mediates global changes in gene expression, shifting from rapid growth to stress survival by linking envelope stress, the stringent response and the catabolite repression systems. Usually binds in the 5'-UTR; binding at or near the Shine-Dalgarno sequence prevents ribosome-binding, repressing translation, binding elsewhere in the 5'-UTR can activate translation and/or stabilize the mRNA. Its function is antagonized by small RNA(s). In Alkalilimnicola ehrlichii (strain ATCC BAA-1101 / DSM 17681 / MLHE-1), this protein is Translational regulator CsrA.